The following is a 470-amino-acid chain: 6-phosphofructo-2-kinase/fructose-2,6-bisphosphatase (470 aa).

Residues Met1–Thr249 form a 6-phosphofructo-2-kinase region. Ser31 carries the post-translational modification Phosphoserine; by PKA. Gly47–Tyr55 serves as a coordination point for ATP. Beta-D-fructose 6-phosphate-binding residues include Arg80 and Arg104. The active site involves Asp130. 2 residues coordinate beta-D-fructose 6-phosphate: Thr132 and Arg138. The active site involves Cys160. Asn169–Lys174 contributes to the ATP binding site. The beta-D-fructose 6-phosphate site is built by Lys174, Arg195, and Tyr199. Positions Pro250 to Phe470 are fructose-2,6-bisphosphatase. Arg257 contacts beta-D-fructose 2,6-bisphosphate. Catalysis depends on His258, which acts as the Tele-phosphohistidine intermediate. Residues Asn264 and Gly270 each contribute to the beta-D-fructose 2,6-bisphosphate site. Glu327 acts as the Proton donor/acceptor in catalysis. Residues Tyr338, Arg352, Lys356, Tyr367, Gln393, and Arg397 each contribute to the beta-D-fructose 2,6-bisphosphate site. Residue Phe349–Arg352 coordinates ATP. ATP contacts are provided by residues Gln393–Arg397 and Tyr429.

In the C-terminal section; belongs to the phosphoglycerate mutase family. In terms of assembly, homodimer.

It carries out the reaction beta-D-fructose 2,6-bisphosphate + H2O = beta-D-fructose 6-phosphate + phosphate. The enzyme catalyses beta-D-fructose 6-phosphate + ATP = beta-D-fructose 2,6-bisphosphate + ADP + H(+). Phosphorylation results in inhibition of the kinase activity. In terms of biological role, synthesis and degradation of fructose 2,6-bisphosphate. The protein is 6-phosphofructo-2-kinase/fructose-2,6-bisphosphatase of Aquarana catesbeiana (American bullfrog).